The sequence spans 141 residues: Large ribosomal subunit protein bL17 (141 aa).

This sequence belongs to the bacterial ribosomal protein bL17 family. In terms of assembly, part of the 50S ribosomal subunit. Contacts protein L32.

This is Large ribosomal subunit protein bL17 from Rhizobium meliloti (strain 1021) (Ensifer meliloti).